A 299-amino-acid polypeptide reads, in one-letter code: Small ribosomal subunit protein uS2 (299 aa).

Residues 227 to 299 (SERKSEKSTK…DKAKASNEEE (73 aa)) form a disordered region.

The protein belongs to the universal ribosomal protein uS2 family.

The sequence is that of Small ribosomal subunit protein uS2 from Christiangramia forsetii (strain DSM 17595 / CGMCC 1.15422 / KT0803) (Gramella forsetii).